A 326-amino-acid polypeptide reads, in one-letter code: uncharacterized protein (326 aa).

Solcar repeat units follow at residues 15-106 (EFLV…VRRV), 114-215 (ETHA…ATDF), and 234-322 (LKTW…SKAL). The next 6 membrane-spanning stretches (helical) occupy residues 16–36 (FLVKSGIAGGTAGCVAKSVVA), 83–103 (TATLYRVFPYAGIKFVAYEQV), 120–140 (FLSGSLAGTCSVFFTYPLELI), 191–211 (FSVTLTGIFPYAGMSFLAYDL), 240–260 (LLCGAFAGVCGQTVSYPFEVC), and 294–314 (FFVGLTIGYIKVIPMVSTSFF).

The protein belongs to the mitochondrial carrier (TC 2.A.29) family.

It localises to the mitochondrion inner membrane. This is an uncharacterized protein from Schizosaccharomyces pombe (strain 972 / ATCC 24843) (Fission yeast).